The sequence spans 856 residues: Structure-specific endonuclease subunit SLX4 (856 aa).

Residues 1 to 19 (MDNAAIASQSNTPPSNGRS) are compositionally biased toward polar residues. Disordered regions lie at residues 1-24 (MDNAAIASQSNTPPSNGRSSARFV), 39-61 (IEPSSPFSPPSPSTLLTSLSKSP), 88-121 (VDSPKRQDKSITGSKAKPASTMRHGQRTASHKMA), 139-201 (KTRK…TDNE), 296-326 (GIQTPTESRPATNDSQSISSKQQRVKVKKPQ), 362-392 (KKMGVTKRTSGTERANAARGKSDTLKNGNGP), 621-640 (SKSSKLEPKPNQRNHKSQGD), 653-688 (RSDSISFVNTRSPKKRLAKTSVKSQESKSFSLSNEG), and 715-742 (DSVGEALPLSPSHSSNGNGTLHHPQDCD). Low complexity predominate over residues 51 to 60 (STLLTSLSKS). A compositionally biased stretch (basic residues) spans 139-152 (KTRKKKAATAKRTR). Over residues 296-309 (GIQTPTESRPATND) the composition is skewed to polar residues. Polar residues predominate over residues 673-686 (SVKSQESKSFSLSN).

This sequence belongs to the SLX4 family. Forms a heterodimer with SLX1. In terms of processing, phosphorylated in response to DNA damage.

Its subcellular location is the nucleus. Functionally, regulatory subunit of the SLX1-SLX4 structure-specific endonuclease that resolves DNA secondary structures generated during DNA repair and recombination. Has endonuclease activity towards branched DNA substrates, introducing single-strand cuts in duplex DNA close to junctions with ss-DNA. This chain is Structure-specific endonuclease subunit SLX4, found in Ajellomyces dermatitidis (strain ER-3 / ATCC MYA-2586) (Blastomyces dermatitidis).